The sequence spans 385 residues: 1-deoxy-D-xylulose 5-phosphate reductoisomerase (385 aa).

NADPH is bound by residues Thr-10, Gly-11, Ser-12, Ile-13, Lys-37, and Asn-124. Lys-125 lines the 1-deoxy-D-xylulose 5-phosphate pocket. Glu-126 contributes to the NADPH binding site. Residue Asp-150 participates in Mn(2+) binding. 1-deoxy-D-xylulose 5-phosphate contacts are provided by Ser-151, Glu-152, Ser-176, and His-199. Glu-152 is a binding site for Mn(2+). Residue Gly-205 coordinates NADPH. Ser-212, Asn-217, Lys-218, and Glu-221 together coordinate 1-deoxy-D-xylulose 5-phosphate. Glu-221 is a binding site for Mn(2+).

It belongs to the DXR family. Mg(2+) is required as a cofactor. Requires Mn(2+) as cofactor.

The enzyme catalyses 2-C-methyl-D-erythritol 4-phosphate + NADP(+) = 1-deoxy-D-xylulose 5-phosphate + NADPH + H(+). It functions in the pathway isoprenoid biosynthesis; isopentenyl diphosphate biosynthesis via DXP pathway; isopentenyl diphosphate from 1-deoxy-D-xylulose 5-phosphate: step 1/6. Functionally, catalyzes the NADPH-dependent rearrangement and reduction of 1-deoxy-D-xylulose-5-phosphate (DXP) to 2-C-methyl-D-erythritol 4-phosphate (MEP). The sequence is that of 1-deoxy-D-xylulose 5-phosphate reductoisomerase from Clostridium novyi (strain NT).